A 56-amino-acid chain; its full sequence is Serine protease inhibitor Kazal-type 1 (56 aa).

One can recognise a Kazal-like domain in the interval 3–56 (LGREAKCNNNAGGCTKIYNPVCGTDGNTYPNECMLCVENQKRQMPVLIQRSGPC). Intrachain disulfides connect Cys-9/Cys-38, Cys-16/Cys-35, and Cys-24/Cys-56.

It is found in the secreted. Its function is as follows. Serine protease inhibitor which exhibits anti-trypsin activity. In the pancreas, protects against trypsin-catalyzed premature activation of zymogens. In the male reproductive tract, binds to sperm heads where it modulates sperm capacitance by inhibiting calcium uptake and nitrogen oxide (NO) production. The chain is Serine protease inhibitor Kazal-type 1 (SPINK1) from Equus caballus (Horse).